A 312-amino-acid polypeptide reads, in one-letter code: Serine acetyltransferase 5 (312 aa).

Residues 1–17 (MPPAGELRHQSPSKEKL) are compositionally biased toward basic and acidic residues. Positions 1 to 25 (MPPAGELRHQSPSKEKLSSVTQSDE) are disordered.

Belongs to the transferase hexapeptide repeat family. Homomultimer. In terms of tissue distribution, mostly expressed in stems, flowers and siliques. Localized in vascular tissues, particularly in phloem.

It localises to the cytoplasm. The catalysed reaction is L-serine + acetyl-CoA = O-acetyl-L-serine + CoA. It participates in amino-acid biosynthesis; L-cysteine biosynthesis; L-cysteine from L-serine: step 1/2. With respect to regulation, feedback inhibitions by L-Ser and acetyl-CoA. The sequence is that of Serine acetyltransferase 5 (SAT5) from Arabidopsis thaliana (Mouse-ear cress).